Consider the following 141-residue polypeptide: Large ribosomal subunit protein uL11 (141 aa).

This sequence belongs to the universal ribosomal protein uL11 family. Part of the ribosomal stalk of the 50S ribosomal subunit. Interacts with L10 and the large rRNA to form the base of the stalk. L10 forms an elongated spine to which L12 dimers bind in a sequential fashion forming a multimeric L10(L12)X complex. One or more lysine residues are methylated.

Its function is as follows. Forms part of the ribosomal stalk which helps the ribosome interact with GTP-bound translation factors. The chain is Large ribosomal subunit protein uL11 from Wolinella succinogenes (strain ATCC 29543 / DSM 1740 / CCUG 13145 / JCM 31913 / LMG 7466 / NCTC 11488 / FDC 602W) (Vibrio succinogenes).